A 300-amino-acid polypeptide reads, in one-letter code: Heme A synthase (300 aa).

Topologically, residues 1–8 are cytoplasmic; sequence MLKEKNLK. A helical transmembrane segment spans residues 9–29; it reads WLSLFTTVLMLFVQIGGALVT. The Extracellular segment spans residues 30 to 64; sequence KTGSADGCGSSWPLCHGKFVPTHIPKETLIELAHR. C37 and C44 are disulfide-bonded. E60 is a catalytic residue. H63 lines the heme o pocket. The chain crosses the membrane as a helical span at residues 65–85; it reads GVSGLALLSVTWLVILSIKYI. Residues 86–92 are Cytoplasmic-facing; it reads GHKKETK. The helical transmembrane segment at 93–113 threads the bilayer; it reads FLCYMSIGFIFAQALIGAAAV. Residues 114-123 are Extracellular-facing; that stretch reads MWQQNGFVLA. The chain crosses the membrane as a helical span at residues 124-144; sequence LHFGISLISFSAVFLLTLLIF. A heme o-binding site is contributed by H125. At 145–163 the chain is on the cytoplasmic side; that stretch reads EVDQKFDATKLILQPKLRR. Residues 164–184 form a helical membrane-spanning segment; it reads HTIGLTSFIYFVIYSGALVRH. The Extracellular segment spans residues 185-218; the sequence is EKASLACSSWPLCRKGAFILPQNFYEWVQMSHRT. C191 and C197 form a disulfide bridge. H216 contributes to the heme b binding site. The helical transmembrane segment at 219–239 threads the bilayer; that stretch reads LAFILFIWLTYVAFHAMRNYA. Topologically, residues 240–249 are cytoplasmic; sequence QYRVIKYGYM. A helical membrane pass occupies residues 250–270; that stretch reads IAFILICLQVTTGALTIFTAV. Residues 271–275 lie on the Extracellular side of the membrane; the sequence is NLYIA. A helical membrane pass occupies residues 276–296; sequence LLHALFITLLFGLLCYFILLI. Residue H278 coordinates heme b. The Cytoplasmic portion of the chain corresponds to 297 to 300; sequence SRAK.

This sequence belongs to the COX15/CtaA family. Type 1 subfamily. As to quaternary structure, interacts with CtaB. The cofactor is heme b.

Its subcellular location is the cell membrane. It carries out the reaction Fe(II)-heme o + 2 A + H2O = Fe(II)-heme a + 2 AH2. It participates in porphyrin-containing compound metabolism; heme A biosynthesis; heme A from heme O: step 1/1. In terms of biological role, catalyzes the conversion of heme O to heme A by two successive hydroxylations of the methyl group at C8. The first hydroxylation forms heme I, the second hydroxylation results in an unstable dihydroxymethyl group, which spontaneously dehydrates, resulting in the formyl group of heme A. This is Heme A synthase from Macrococcus caseolyticus (strain JCSC5402) (Macrococcoides caseolyticum).